Here is a 150-residue protein sequence, read N- to C-terminus: Large-conductance mechanosensitive channel (150 aa).

2 consecutive transmembrane segments (helical) span residues 14–34 (VIDLAIGIIIGAAFGKIVTSF) and 81–101 (GVFLNSIIDFIIVAVAIFLVV).

Belongs to the MscL family. In terms of assembly, homopentamer.

The protein resides in the cell membrane. Its function is as follows. Channel that opens in response to stretch forces in the membrane lipid bilayer. May participate in the regulation of osmotic pressure changes within the cell. This Syntrophomonas wolfei subsp. wolfei (strain DSM 2245B / Goettingen) protein is Large-conductance mechanosensitive channel.